The primary structure comprises 168 residues: Ribosome maturation factor RimP (168 aa).

It belongs to the RimP family.

The protein localises to the cytoplasm. In terms of biological role, required for maturation of 30S ribosomal subunits. The sequence is that of Ribosome maturation factor RimP from Rickettsia bellii (strain OSU 85-389).